A 115-amino-acid polypeptide reads, in one-letter code: Large ribosomal subunit protein bL19 (115 aa).

Belongs to the bacterial ribosomal protein bL19 family.

In terms of biological role, this protein is located at the 30S-50S ribosomal subunit interface and may play a role in the structure and function of the aminoacyl-tRNA binding site. In Thermosipho africanus (strain TCF52B), this protein is Large ribosomal subunit protein bL19.